Here is a 662-residue protein sequence, read N- to C-terminus: p-hydroxybenzoic acid efflux pump subunit AaeB (662 aa).

11 consecutive transmembrane segments (helical) span residues 22–42 (FAFK…HLQL), 52–72 (AAIV…SGAI), 76–96 (GMLR…IIIA), 102–122 (VVML…SSLV), 129–149 (IFGL…GTPL), 161–181 (EIVL…PRSI), 378–398 (LFWL…IAVV), 415–435 (FLFG…FIMP), 439–459 (QSML…GLEV), 465–485 (GSLG…PMTF), and 491–511 (LDSA…IMLI).

This sequence belongs to the aromatic acid exporter ArAE (TC 2.A.85) family.

It is found in the cell inner membrane. In terms of biological role, forms an efflux pump with AaeA. Could function as a metabolic relief valve, allowing to eliminate certain compounds when they accumulate to high levels in the cell. The protein is p-hydroxybenzoic acid efflux pump subunit AaeB of Pectobacterium atrosepticum (strain SCRI 1043 / ATCC BAA-672) (Erwinia carotovora subsp. atroseptica).